The chain runs to 81 residues: ATP synthase subunit c, chloroplastic (81 aa).

2 helical membrane passes run 3 to 23 and 57 to 77; these read PIISAASVIAAGLAVGLASIG and LAFMEALTIYGLVVALALLFA.

This sequence belongs to the ATPase C chain family. As to quaternary structure, F-type ATPases have 2 components, F(1) - the catalytic core - and F(0) - the membrane proton channel. F(1) has five subunits: alpha(3), beta(3), gamma(1), delta(1), epsilon(1). F(0) has four main subunits: a(1), b(1), b'(1) and c(10-14). The alpha and beta chains form an alternating ring which encloses part of the gamma chain. F(1) is attached to F(0) by a central stalk formed by the gamma and epsilon chains, while a peripheral stalk is formed by the delta, b and b' chains.

The protein localises to the plastid. The protein resides in the chloroplast thylakoid membrane. F(1)F(0) ATP synthase produces ATP from ADP in the presence of a proton or sodium gradient. F-type ATPases consist of two structural domains, F(1) containing the extramembraneous catalytic core and F(0) containing the membrane proton channel, linked together by a central stalk and a peripheral stalk. During catalysis, ATP synthesis in the catalytic domain of F(1) is coupled via a rotary mechanism of the central stalk subunits to proton translocation. Its function is as follows. Key component of the F(0) channel; it plays a direct role in translocation across the membrane. A homomeric c-ring of between 10-14 subunits forms the central stalk rotor element with the F(1) delta and epsilon subunits. This chain is ATP synthase subunit c, chloroplastic, found in Cicer arietinum (Chickpea).